We begin with the raw amino-acid sequence, 571 residues long: Septation ring formation regulator EzrA (571 aa).

Topologically, residues 1-3 are extracellular; that stretch reads MYY. A helical membrane pass occupies residues 4 to 22; that stretch reads MLIGFIIVVIAVIGAGYIL. The Cytoplasmic segment spans residues 23–571; that stretch reads KRKHYQRINE…ESKVSVDDIE (549 aa). Coiled coils occupy residues 248-298, 326-374, 400-437, and 478-529; these read LAQM…DTLE, DALA…ASGE, KFAE…ERER, and RIAE…ENHF.

This sequence belongs to the EzrA family.

The protein resides in the cell membrane. Functionally, negative regulator of FtsZ ring formation; modulates the frequency and position of FtsZ ring formation. Inhibits FtsZ ring formation at polar sites. Interacts either with FtsZ or with one of its binding partners to promote depolymerization. This chain is Septation ring formation regulator EzrA, found in Listeria monocytogenes serotype 4b (strain CLIP80459).